The following is a 362-amino-acid chain: S-adenosylmethionine decarboxylase proenzyme (362 aa).

Active-site residues include Glu13 and Glu16. Ser73 acts as the Schiff-base intermediate with substrate; via pyruvic acid in catalysis. At Ser73 the chain carries Pyruvic acid (Ser); by autocatalysis. The active-site Proton donor; for catalytic activity is Cys87. Residues Ser236 and His249 each act as proton acceptor; for processing activity in the active site.

The protein belongs to the eukaryotic AdoMetDC family. It depends on pyruvate as a cofactor. In terms of processing, is synthesized initially as an inactive proenzyme. Formation of the active enzyme involves a self-maturation process in which the active site pyruvoyl group is generated from an internal serine residue via an autocatalytic post-translational modification. Two non-identical subunits are generated from the proenzyme in this reaction, and the pyruvate is formed at the N-terminus of the alpha chain, which is derived from the carboxyl end of the proenzyme. The post-translation cleavage follows an unusual pathway, termed non-hydrolytic serinolysis, in which the side chain hydroxyl group of the serine supplies its oxygen atom to form the C-terminus of the beta chain, while the remainder of the serine residue undergoes an oxidative deamination to produce ammonia and the pyruvoyl group blocking the N-terminus of the alpha chain.

The enzyme catalyses S-adenosyl-L-methionine + H(+) = S-adenosyl 3-(methylsulfanyl)propylamine + CO2. The protein operates within amine and polyamine biosynthesis; S-adenosylmethioninamine biosynthesis; S-adenosylmethioninamine from S-adenosyl-L-methionine: step 1/1. This Datura stramonium (Jimsonweed) protein is S-adenosylmethionine decarboxylase proenzyme (SAMDC).